Reading from the N-terminus, the 388-residue chain is Mannitol-1-phosphate 5-dehydrogenase (388 aa).

NAD(+) is bound at residue 5 to 16; it reads AIQFGGGNIGRG. K213 is a catalytic residue.

The protein belongs to the mannitol dehydrogenase family. As to quaternary structure, monomer.

It carries out the reaction D-mannitol 1-phosphate + NAD(+) = beta-D-fructose 6-phosphate + NADH + H(+). Catalyzes the NAD(H)-dependent interconversion of D-fructose 6-phosphate and D-mannitol 1-phosphate in the mannitol metabolic pathway. Has a strong preference for NADH over NADPH. Required for protection of conidiospores against exogenous stresses such as high temperatures and an oxidative environment. This chain is Mannitol-1-phosphate 5-dehydrogenase (mpdA), found in Aspergillus niger.